Reading from the N-terminus, the 254-residue chain is Adenosylcobinamide-GDP ribazoletransferase (254 aa).

6 consecutive transmembrane segments (helical) span residues 36–56, 61–81, 114–134, 138–158, 197–217, and 232–252; these read YYPLVGLILGGALWLALTLLL, PLVTAALLLALELILTGGIHL, ALSAMVYLLLKFSLLAGLLAL, LVPYLVLFMPILSRWIFLIGV, WVLQWPGIAGFILATLFILLF, and LYGASIELSELLFLLGAFPLL.

Belongs to the CobS family. Requires Mg(2+) as cofactor.

The protein localises to the cell membrane. The catalysed reaction is alpha-ribazole + adenosylcob(III)inamide-GDP = adenosylcob(III)alamin + GMP + H(+). It catalyses the reaction alpha-ribazole 5'-phosphate + adenosylcob(III)inamide-GDP = adenosylcob(III)alamin 5'-phosphate + GMP + H(+). Its pathway is cofactor biosynthesis; adenosylcobalamin biosynthesis; adenosylcobalamin from cob(II)yrinate a,c-diamide: step 7/7. Functionally, joins adenosylcobinamide-GDP and alpha-ribazole to generate adenosylcobalamin (Ado-cobalamin). Also synthesizes adenosylcobalamin 5'-phosphate from adenosylcobinamide-GDP and alpha-ribazole 5'-phosphate. The polypeptide is Adenosylcobinamide-GDP ribazoletransferase (Desulfitobacterium hafniense (strain Y51)).